The chain runs to 491 residues: Glutamyl-tRNA(Gln) amidotransferase subunit A (491 aa).

Catalysis depends on charge relay system residues lysine 79 and serine 154. Catalysis depends on serine 178, which acts as the Acyl-ester intermediate.

Belongs to the amidase family. GatA subfamily. In terms of assembly, heterotrimer of A, B and C subunits.

It catalyses the reaction L-glutamyl-tRNA(Gln) + L-glutamine + ATP + H2O = L-glutaminyl-tRNA(Gln) + L-glutamate + ADP + phosphate + H(+). Functionally, allows the formation of correctly charged Gln-tRNA(Gln) through the transamidation of misacylated Glu-tRNA(Gln) in organisms which lack glutaminyl-tRNA synthetase. The reaction takes place in the presence of glutamine and ATP through an activated gamma-phospho-Glu-tRNA(Gln). In Alkaliphilus metalliredigens (strain QYMF), this protein is Glutamyl-tRNA(Gln) amidotransferase subunit A.